Reading from the N-terminus, the 430-residue chain is Serine hydroxymethyltransferase (430 aa).

120-122 (GHI) lines the (6S)-5,6,7,8-tetrahydrofolate pocket. K226 bears the N6-(pyridoxal phosphate)lysine mark.

It belongs to the SHMT family. As to quaternary structure, homodimer. Requires pyridoxal 5'-phosphate as cofactor.

The protein resides in the cytoplasm. Its pathway is amino-acid biosynthesis; glycine biosynthesis; glycine from L-serine: step 1/1. Its function is as follows. Catalyzes the reversible interconversion of serine and glycine with a modified folate serving as the one-carbon carrier. Also exhibits a pteridine-independent aldolase activity toward beta-hydroxyamino acids, producing glycine and aldehydes, via a retro-aldol mechanism. The sequence is that of Serine hydroxymethyltransferase from Pyrobaculum neutrophilum (strain DSM 2338 / JCM 9278 / NBRC 100436 / V24Sta) (Thermoproteus neutrophilus).